The sequence spans 610 residues: E-selectin (610 aa).

An N-terminal signal peptide occupies residues 1–21 (MIASQFLSALTLVLLIKESGA). Residues 22–138 (WSYSASTTNM…CNKKKLALCY (117 aa)) enclose the C-type lectin domain. The Extracellular segment spans residues 22–555 (WSYSASTTNM…CEATAKSNIP (534 aa)). N30 is a glycosylation site (N-linked (GlcNAc...) asparagine). Intrachain disulfides connect C40–C137, C110–C129, C142–C153, C147–C162, C164–C173, C179–C223, C192–C205, C209–C236, C241–C285, C254–C267, C271–C298, C303–C348, C334–C361, C366–C411, C397–C424, C429–C474, C460–C487, C492–C533, and C519–C546. Positions 101, 103, and 108 each coordinate Ca(2+). Residues 101-108 (EPNNKQNE), 112-117 (EIYIKR), and 125-127 (NDE) contribute to the a carbohydrate site. The Ca(2+) site is built by N125 and D126. One can recognise an EGF-like domain in the interval 139-174 (TAACTHTSCSGHGECVETINNYTCQCHPGFTGLRCE). N-linked (GlcNAc...) asparagine glycosylation is present at N159. Sushi domains follow at residues 177-238 (VTCQ…ACHV), 239-300 (VECD…TCKA), 314-363 (VNCS…VCKA), 365-426 (QCKA…TCEA), 428-489 (RCDA…SCQV), and 490-548 (VQCA…TCEA). 2 N-linked (GlcNAc...) asparagine glycosylation sites follow: N198 and N202. Residue N264 is glycosylated (N-linked (GlcNAc...) asparagine). N-linked (GlcNAc...) asparagine glycans are attached at residues N315, N327, and N331. A glycan (N-linked (GlcNAc...) asparagine) is linked at N526. Residues 556 to 577 (LTVGLSAAGTSLLTLASFLFWL) form a helical membrane-spanning segment. Residues 578-610 (LKRLRRKAKKFVPASSYQSLQSDGSYQMPSESA) lie on the Cytoplasmic side of the membrane.

The protein belongs to the selectin/LECAM family. Interacts with SELPLG/PSGL1 and PODXL2 through the sialyl Lewis X epitope. SELPLG sulfation appears not to be required for this interaction.

Its subcellular location is the cell membrane. In terms of biological role, cell-surface glycoprotein having a role in immunoadhesion. Mediates in the adhesion of blood neutrophils in cytokine-activated endothelium through interaction with SELPLG/PSGL1. May have a role in capillary morphogenesis. This is E-selectin (SELE) from Equus caballus (Horse).